Consider the following 281-residue polypeptide: Thioesterase PikA5 (281 aa).

Residues 26 to 249 form a thioesterase region; that stretch reads RLVCLPHAGG…WHEICNDISD (224 aa). The active-site Nucleophile; for thioesterase activity is the Ser99. The Proton acceptor; for thioesterase activity role is filled by His233.

The protein belongs to the thioesterase family.

Its pathway is antibiotic biosynthesis. In terms of biological role, involved in the biosynthesis of 12- and 14-membered ring macrolactone antibiotics such as methymycin, neomethymycin, narbomycin and pikromycin. Responsible for removing mis-formed acyl moieties (aberrant decarboxylation) that are bound to the PKS and could block it. Catalyzes the cleavage of methylmalonyl-[acp]. It exhibits some acyl-group specificity, and catalyzes the cleavage of propionyl and butyryl derivatives faster than acetyl malonyl or methylmalonyl derivatives. The chain is Thioesterase PikA5 from Streptomyces venezuelae.